Consider the following 427-residue polypeptide: Glutamate-1-semialdehyde 2,1-aminomutase (427 aa).

Lysine 265 carries the N6-(pyridoxal phosphate)lysine modification.

The protein belongs to the class-III pyridoxal-phosphate-dependent aminotransferase family. HemL subfamily. In terms of assembly, homodimer. Pyridoxal 5'-phosphate is required as a cofactor.

It localises to the cytoplasm. It catalyses the reaction (S)-4-amino-5-oxopentanoate = 5-aminolevulinate. Its pathway is porphyrin-containing compound metabolism; protoporphyrin-IX biosynthesis; 5-aminolevulinate from L-glutamyl-tRNA(Glu): step 2/2. This chain is Glutamate-1-semialdehyde 2,1-aminomutase, found in Shewanella amazonensis (strain ATCC BAA-1098 / SB2B).